We begin with the raw amino-acid sequence, 203 residues long: Small ribosomal subunit protein uS4 (203 aa).

The S4 RNA-binding domain occupies 93–153 (RRLDNVVYRL…EKSKNLQQVK (61 aa)).

Belongs to the universal ribosomal protein uS4 family. Part of the 30S ribosomal subunit. Contacts protein S5. The interaction surface between S4 and S5 is involved in control of translational fidelity.

One of the primary rRNA binding proteins, it binds directly to 16S rRNA where it nucleates assembly of the body of the 30S subunit. Its function is as follows. With S5 and S12 plays an important role in translational accuracy. The protein is Small ribosomal subunit protein uS4 of Lactobacillus delbrueckii subsp. bulgaricus (strain ATCC 11842 / DSM 20081 / BCRC 10696 / JCM 1002 / NBRC 13953 / NCIMB 11778 / NCTC 12712 / WDCM 00102 / Lb 14).